Consider the following 1194-residue polypeptide: Peroxisomal ATPase PEX1 (1194 aa).

Residues 220–255 (KTRQRRMSHQGKSVKAKSLASTRHGKRRDDGSGPSG) form a disordered region. A compositionally biased stretch (basic residues) spans 221 to 234 (TRQRRMSHQGKSVK). Residues 538 to 730 (RSASVLLTGA…GPEPTLKIEK (193 aa)) are AAA-cassette D1. Residues 546–553 (GARGSGKT) and 849–856 (GYPGCGKT) contribute to the ATP site. An AAA-cassette D2 region spans residues 844–1028 (GLLLYGYPGC…LYNAHLEAIH (185 aa)). Disordered regions lie at residues 1062-1084 (YISF…LTNG), 1116-1139 (QVQQ…EPVI), and 1174-1194 (RSGE…SSLM). Residues 1066-1084 (SMGNKDSTGEPSTQPLTNG) are compositionally biased toward polar residues. The segment covering 1116-1127 (QVQQQQSQTNQA) has biased composition (low complexity).

The protein belongs to the AAA ATPase family. As to quaternary structure, interacts with PEX6; forming the PEX1-PEX6 AAA ATPase complex, which is composed of a heterohexamer formed by a trimer of PEX1-PEX6 dimers.

The protein resides in the cytoplasm. Its subcellular location is the cytosol. The protein localises to the peroxisome membrane. The catalysed reaction is ATP + H2O = ADP + phosphate + H(+). Its function is as follows. Component of the PEX1-PEX6 AAA ATPase complex, a protein dislocase complex that mediates the ATP-dependent extraction of the PEX5 receptor from peroxisomal membranes, an essential step for PEX5 recycling. Specifically recognizes PEX5 monoubiquitinated at 'Cys-6', and pulls it out of the peroxisome lumen through the PEX2-PEX10-PEX12 retrotranslocation channel. Extraction by the PEX1-PEX6 AAA ATPase complex is accompanied by unfolding of the TPR repeats and release of bound cargo from PEX5. Regulates autophagy and biogenesis of peroxisomes and Woronin bodies. Plays important roles in mycelial growth and development and stress response. Is also essential for conidiation and fatty acid utilization. Required for nematode predation via trap formation. This chain is Peroxisomal ATPase PEX1, found in Arthrobotrys oligospora (strain ATCC 24927 / CBS 115.81 / DSM 1491) (Nematode-trapping fungus).